A 998-amino-acid polypeptide reads, in one-letter code: Methyl sulfide methyltransferase-associated sensor (998 aa).

One can recognise a PAS 1 domain in the interval 40–77 (FGYSPKDFISGGLGYADIIYPADLEIAVSQFFSYVEKD). The region spanning 117-169 (FTQQYRLLNKSGDVLWVEAEIKVLEEEEGKAGLFQVTVFDISRWKHTEKAMPA) is the PAC 1 domain. In terms of domain architecture, PAS 2 spans 209–246 (LGYTPEDFTSGRIVYTDIIHPDDLDNVRAEVSKNTEEG). Residues 250-302 (FSKEYRVLAKSGEVRYVDERTLIRRNEKGEITCYQGILLDITQRKEAEELILS) enclose the PAC 2 domain. The region spanning 314 to 458 (ASLDEVLLLL…NAYLAGIAIE (145 aa)) is the GAF 1 domain. Residues 469-540 (SENRFRTIFD…ENMQKIKAEG (72 aa)) form the PAS 3 domain. The GAF 2 domain occupies 609–752 (ASLKEITDFA…LMQGMWQLIQ (144 aa)). Residue Cys656 coordinates heme. A Histidine kinase domain is found at 783–998 (EFVEEMMFPE…GNLMHVKLPK (216 aa)).

Heme serves as cofactor. Autophosphorylates: autophosphorylation is dependent on the redox state of heme cofactor and is promoted upon reduction.

It is found in the cytoplasm. It catalyses the reaction ATP + protein L-histidine = ADP + protein N-phospho-L-histidine.. Its function is as follows. Heme-binding sensor kinase component part of a two-component regulatory system involved in methyl sulfide metabolism. Does not act as a phytochrome-like photoreceptor. The protein is Methyl sulfide methyltransferase-associated sensor (msmS) of Methanosarcina acetivorans (strain ATCC 35395 / DSM 2834 / JCM 12185 / C2A).